The primary structure comprises 333 residues: Glycerol-3-phosphate dehydrogenase [NAD(P)+] (333 aa).

The NADPH site is built by W12, H31, and K105. Positions 105, 134, and 136 each coordinate sn-glycerol 3-phosphate. A138 lines the NADPH pocket. Residues K189, D242, S252, R253, and N254 each contribute to the sn-glycerol 3-phosphate site. K189 functions as the Proton acceptor in the catalytic mechanism. Residue R253 coordinates NADPH. The NADPH site is built by V278 and E280.

The protein belongs to the NAD-dependent glycerol-3-phosphate dehydrogenase family.

It is found in the cytoplasm. The enzyme catalyses sn-glycerol 3-phosphate + NAD(+) = dihydroxyacetone phosphate + NADH + H(+). The catalysed reaction is sn-glycerol 3-phosphate + NADP(+) = dihydroxyacetone phosphate + NADPH + H(+). The protein operates within membrane lipid metabolism; glycerophospholipid metabolism. Catalyzes the reduction of the glycolytic intermediate dihydroxyacetone phosphate (DHAP) to sn-glycerol 3-phosphate (G3P), the key precursor for phospholipid synthesis. This chain is Glycerol-3-phosphate dehydrogenase [NAD(P)+], found in Brachyspira hyodysenteriae (strain ATCC 49526 / WA1).